The following is a 113-amino-acid chain: MDALHGICVNINKFYKCRRIVIEYDNCSASFTFNCVHDNRKVNCLEIVGLRRNEYVCLGKIINGDKIISVHENSVNGKIIVPVEDTFDFGLFTLKNKITDAVIKLNVYINETS.

This Autographa californica nuclear polyhedrosis virus (AcMNPV) protein is ECORI-T site protein ETM (ETM).